A 110-amino-acid chain; its full sequence is Large ribosomal subunit protein uL22 (110 aa).

The protein belongs to the universal ribosomal protein uL22 family. In terms of assembly, part of the 50S ribosomal subunit.

This protein binds specifically to 23S rRNA; its binding is stimulated by other ribosomal proteins, e.g. L4, L17, and L20. It is important during the early stages of 50S assembly. It makes multiple contacts with different domains of the 23S rRNA in the assembled 50S subunit and ribosome. In terms of biological role, the globular domain of the protein is located near the polypeptide exit tunnel on the outside of the subunit, while an extended beta-hairpin is found that lines the wall of the exit tunnel in the center of the 70S ribosome. In Saccharophagus degradans (strain 2-40 / ATCC 43961 / DSM 17024), this protein is Large ribosomal subunit protein uL22.